The sequence spans 329 residues: Two pore potassium channel protein sup-9 (329 aa).

Residues 1–8 are Cytoplasmic-facing; the sequence is MKRQNIRT. Residues 9-29 traverse the membrane as a helical segment; sequence LSLIVCTLTYLLVGAAVFDAL. A glycan (N-linked (GlcNAc...) asparagine) is linked at asparagine 53. The segment at residues 80–100 is an intramembrane region (pore-forming); that stretch reads FSGAFYFATTVITTIGYGHST. The short motif at 93-98 is the Selectivity filter element; the sequence is TIGYGH. A helical membrane pass occupies residues 108-128; it reads VFCMLYALAGIPLGLIMFQSI. At 129–157 the chain is on the cytoplasmic side; the sequence is GERMNTFAAKLLRFIRRAAGKQPIVTSSD. Residues 158-178 traverse the membrane as a helical segment; it reads LIIFCTGWGGLLIFGGAFMFS. Asparagine 182 is a glycosylation site (N-linked (GlcNAc...) asparagine). The segment at residues 186 to 206 is an intramembrane region (pore-forming); the sequence is FDAVYYCFVTLTTIGFGDYVA. The Selectivity filter motif lies at 198–203; it reads TIGFGD. Residues 220–240 form a helical membrane-spanning segment; the sequence is VFFSLVFILFGLTVISAAMNL. The Cytoplasmic segment spans residues 241-329; the sequence is LVLRFLTMNT…FSGMTTRPKY (89 aa). The tract at residues 289–296 is may be important for regulation by and/or interaction with sup-10; that stretch reads SLASCSCY. The segment at 307 to 329 is disordered; sequence HRKHTEPHGGPPTFSGMTTRPKY.

The protein belongs to the two pore domain potassium channel (TC 1.A.1.8) family. As to quaternary structure, may form a complex with the regulatory subunits unc-93 and sup-10. As to expression, low levels along surface of body-wall muscle cells, in vulval and intestinal muscles and, more weakly, in anal depressor and sphincter muscles. Also expressed in a subset of head neurons.

Its subcellular location is the membrane. In terms of biological role, potassium channel involved in coordination of muscle contraction. Activity is regulated by sup-18. This Caenorhabditis elegans protein is Two pore potassium channel protein sup-9.